A 243-amino-acid polypeptide reads, in one-letter code: tRNA (guanine-N(1)-)-methyltransferase (243 aa).

S-adenosyl-L-methionine is bound by residues Gly-110 and 130-135; that span reads VGDYVM.

The protein belongs to the RNA methyltransferase TrmD family. Homodimer.

The protein localises to the cytoplasm. The catalysed reaction is guanosine(37) in tRNA + S-adenosyl-L-methionine = N(1)-methylguanosine(37) in tRNA + S-adenosyl-L-homocysteine + H(+). Its function is as follows. Specifically methylates guanosine-37 in various tRNAs. In Treponema denticola (strain ATCC 35405 / DSM 14222 / CIP 103919 / JCM 8153 / KCTC 15104), this protein is tRNA (guanine-N(1)-)-methyltransferase.